The following is a 446-amino-acid chain: Histidine--tRNA ligase (446 aa).

The disordered stretch occupies residues 403 to 422 (TASVKPLRGTGDDGEKSVQQ).

This sequence belongs to the class-II aminoacyl-tRNA synthetase family. In terms of assembly, homodimer.

It is found in the cytoplasm. The enzyme catalyses tRNA(His) + L-histidine + ATP = L-histidyl-tRNA(His) + AMP + diphosphate + H(+). The protein is Histidine--tRNA ligase of Burkholderia thailandensis (strain ATCC 700388 / DSM 13276 / CCUG 48851 / CIP 106301 / E264).